Consider the following 103-residue polypeptide: uncharacterized protein (103 aa).

This is an uncharacterized protein from Mycoplasma pneumoniae (strain ATCC 29342 / M129 / Subtype 1) (Mycoplasmoides pneumoniae).